The following is a 240-amino-acid chain: Homeobox protein DLX-4 (240 aa).

Disordered regions lie at residues 44–70 and 175–194; these read DLSYSQSYGHPRSYSHPGPATPGDSYL and LKQSSGEPEEDFSGRPPSLS. Positions 116–175 form a DNA-binding region, homeobox; the sequence is LRKPRTIYSSLQLQHLNQRFQHTQYLALPERAQLAAQLGLTQTQVKIWFQNKRSKYKKLL.

Belongs to the distal-less homeobox family. In terms of tissue distribution, branchial arches, molar and incisor teeth and limbs.

It localises to the nucleus. May play a role in determining the production of hemoglobin S. May act as a repressor. During embryonic development, plays a role in palatogenesis. This is Homeobox protein DLX-4 (Dlx4) from Mus musculus (Mouse).